We begin with the raw amino-acid sequence, 306 residues long: Large ribosomal subunit protein uL2m (306 aa).

The transit peptide at 1 to 60 directs the protein to the mitochondrion; sequence MALRVVTRALGSLSLTPRIAAVPGPSLLPAAQVTNNVLLQLPSASMLLPSRPLLTSVALS.

This sequence belongs to the universal ribosomal protein uL2 family. As to quaternary structure, component of the mitochondrial ribosome large subunit (39S) which comprises a 16S rRNA and about 50 distinct proteins.

Its subcellular location is the mitochondrion. In Bos taurus (Bovine), this protein is Large ribosomal subunit protein uL2m (MRPL2).